The sequence spans 194 residues: 7-methyl-GTP pyrophosphatase (194 aa).

Residue Asp70 is the Proton acceptor of the active site.

This sequence belongs to the Maf family. YceF subfamily. A divalent metal cation serves as cofactor.

The protein localises to the cytoplasm. It catalyses the reaction N(7)-methyl-GTP + H2O = N(7)-methyl-GMP + diphosphate + H(+). In terms of biological role, nucleoside triphosphate pyrophosphatase that hydrolyzes 7-methyl-GTP (m(7)GTP). May have a dual role in cell division arrest and in preventing the incorporation of modified nucleotides into cellular nucleic acids. The sequence is that of 7-methyl-GTP pyrophosphatase from Vibrio vulnificus (strain YJ016).